Consider the following 368-residue polypeptide: tRNA-specific 2-thiouridylase MnmA (368 aa).

Residues 12–19 and M38 contribute to the ATP site; that span reads GMSGGVDS. The interaction with target base in tRNA stretch occupies residues 98–100; that stretch reads NPD. The active-site Nucleophile is the C103. C103 and C200 are disulfide-bonded. G128 is an ATP binding site. The tract at residues 150–152 is interaction with tRNA; it reads KDQ. Catalysis depends on C200, which acts as the Cysteine persulfide intermediate. An interaction with tRNA region spans residues 313-314; the sequence is RY.

This sequence belongs to the MnmA/TRMU family. In terms of assembly, interacts with TusE.

It is found in the cytoplasm. It catalyses the reaction S-sulfanyl-L-cysteinyl-[protein] + uridine(34) in tRNA + AH2 + ATP = 2-thiouridine(34) in tRNA + L-cysteinyl-[protein] + A + AMP + diphosphate + H(+). Catalyzes the 2-thiolation of uridine at the wobble position (U34) of tRNA(Lys), tRNA(Glu) and tRNA(Gln), leading to the formation of s(2)U34, the first step of tRNA-mnm(5)s(2)U34 synthesis. Sulfur is provided by IscS, via a sulfur-relay system. Binds ATP and its substrate tRNAs. The sequence is that of tRNA-specific 2-thiouridylase MnmA from Pectobacterium atrosepticum (strain SCRI 1043 / ATCC BAA-672) (Erwinia carotovora subsp. atroseptica).